The following is a 346-amino-acid chain: C5a anaphylatoxin chemotactic receptor 1 (346 aa).

The Extracellular portion of the chain corresponds to 1-33 (MDDNNSDWTSYDFGNDTIPSPNEISLSHIGTRH). Asn-4 and Asn-15 each carry an N-linked (GlcNAc...) asparagine glycan. Residues 34 to 60 (WITLVCYGIVFLLGVPGNALVVWVTGF) form a helical membrane-spanning segment. Over 61–65 (RMPNS) the chain is Cytoplasmic. The helical transmembrane segment at 66-89 (VNAQWFLNLAIADLLCCLSLPILM) threads the bilayer. Residues 90–106 (VPLAQDQHWPFGALACK) lie on the Extracellular side of the membrane. A disulfide bridge links Cys-105 with Cys-183. The chain crosses the membrane as a helical span at residues 107–128 (LFSGIFYMMMYCSVLLLVVISL). The Cytoplasmic segment spans residues 129–149 (DRFLLVTKPVWCQNNRQPRQA). A helical transmembrane segment spans residues 150-170 (RILCFIIWILGLLGSSPYFAH). The Extracellular segment spans residues 171–194 (MEIQHHSETKTVCTGSYSSLGHAW). Residues 195–220 (AITIIRSFLFFLLPFLIICISHWKVY) traverse the membrane as a helical segment. Over 221–238 (HMTSSGRRQRDKSSRTLR) the chain is Cytoplasmic. The helical transmembrane segment at 239–261 (VILALVLGFFLCWTPLHIVDLLI) threads the bilayer. Residues 262-279 (LVSDQPSERFEVNLNLAH) are Extracellular-facing. The helical transmembrane segment at 280-300 (VLTLCLAYINSCLNPLLYVCL) threads the bilayer. The Cytoplasmic portion of the chain corresponds to 301 to 346 (GRGFKENLISSLRSVLHFASEAPTHGPSMTTNSKSTTDGVFREKPV). Positions 323–346 (PTHGPSMTTNSKSTTDGVFREKPV) are disordered. Over residues 327–338 (PSMTTNSKSTTD) the composition is skewed to polar residues.

The protein belongs to the G-protein coupled receptor 1 family.

The protein resides in the cell membrane. In terms of biological role, receptor for the chemotactic and inflammatory peptide anaphylatoxin C5a. This receptor stimulates chemotaxis, granule enzyme release and superoxide anion production. In Danio rerio (Zebrafish), this protein is C5a anaphylatoxin chemotactic receptor 1 (c5ar1).